The chain runs to 358 residues: UPF0575 protein C19orf67 (358 aa).

Residues Met1 to Leu84 are disordered. Pro residues-rich tracts occupy residues Glu17–Gly32 and Pro70–Pro80.

It belongs to the UPF0575 family.

This Homo sapiens (Human) protein is UPF0575 protein C19orf67 (C19orf67).